The sequence spans 71 residues: Plasticin-DA1 (71 aa).

The N-terminal stretch at 1–22 is a signal peptide; it reads MAFLKKSLFLVLFLALVPLSIC. Positions 23–42 are excised as a propeptide; it reads EAEKREEENEEKQEDDDESE. The disordered stretch occupies residues 25 to 45; sequence EKREEENEEKQEDDDESEKKR. Positions 30-40 are enriched in acidic residues; the sequence is ENEEKQEDDDE. The residue at position 68 (glycine 68) is a Glycine amide. A propeptide spanning residues 70-71 is cleaved from the precursor; it reads ER.

Belongs to the frog skin active peptide (FSAP) family. Plasticin subfamily. In terms of tissue distribution, expressed by the skin glands.

The protein resides in the secreted. The protein localises to the target cell membrane. In terms of biological role, neutral peptide with no antimicrobial activity. Does not permeate bacterial membranes. May act in synergy with cationic peptides by enhancing their activity. Has a moderate hemolytic activity. It interacts with zwitterionic phospholipids (DMPC) without perturbing either the interface or inside of the bilayer, whereas it causes little perturbations at the interface peptide-anionic vesicles (DMPG) as well as in the bilayer alkyl chains. This Agalychnis dacnicolor (Giant Mexican leaf frog) protein is Plasticin-DA1.